A 92-amino-acid polypeptide reads, in one-letter code: PqqA binding protein (92 aa).

Belongs to the PqqD family. Monomer. Interacts with PqqE.

It participates in cofactor biosynthesis; pyrroloquinoline quinone biosynthesis. Its function is as follows. Functions as a PqqA binding protein and presents PqqA to PqqE, in the pyrroloquinoline quinone (PQQ) biosynthetic pathway. This is PqqA binding protein from Xanthomonas axonopodis pv. citri (strain 306).